A 190-amino-acid chain; its full sequence is CDP-diacylglycerol--glycerol-3-phosphate 3-phosphatidyltransferase (190 aa).

Residues Gly-6 to Phe-17 are Cytoplasmic-facing. A helical transmembrane segment spans residues Arg-18–Leu-42. Residues Ile-43–Ser-65 are Periplasmic-facing. The chain crosses the membrane as a helical span at residues Arg-66–Leu-86. Topologically, residues Ile-87–Phe-91 are cytoplasmic. The helical transmembrane segment at His-92 to Ser-112 threads the bilayer. Residues Leu-113 to Leu-150 are Periplasmic-facing. The helical transmembrane segment at Asn-151–Met-173 threads the bilayer. Residues Cys-174 to Gln-186 lie on the Cytoplasmic side of the membrane.

The protein belongs to the CDP-alcohol phosphatidyltransferase class-I family.

It localises to the cell inner membrane. It catalyses the reaction a CDP-1,2-diacyl-sn-glycerol + sn-glycerol 3-phosphate = a 1,2-diacyl-sn-glycero-3-phospho-(1'-sn-glycero-3'-phosphate) + CMP + H(+). Its pathway is phospholipid metabolism; phosphatidylglycerol biosynthesis; phosphatidylglycerol from CDP-diacylglycerol: step 1/2. Functionally, catalyzes the conversion of cytidine diphosphate diacylglycerol (CDP-DG) and glycerol 3-phosphate into phosphatidylglycerol. Essential for the synthesis of anionic phospholipids, thereby playing a role in balancing the ratio of zwitterionic and anionic phospholipids, which is thought to be important for normal membrane function. This is CDP-diacylglycerol--glycerol-3-phosphate 3-phosphatidyltransferase from Blochmanniella floridana.